We begin with the raw amino-acid sequence, 326 residues long: Phospho-N-acetylmuramoyl-pentapeptide-transferase (326 aa).

9 helical membrane passes run 3-23 (ISIS…PAFI), 51-71 (TMGG…FALF), 79-99 (VGMI…DDFL), 115-135 (LALQ…GGDI), 138-158 (VFGY…FWLV), 169-189 (GVDG…GVIA), 195-215 (MDIL…FIFN), 221-243 (VFMG…MALH), and 306-326 (FFFW…LYLM).

The protein belongs to the glycosyltransferase 4 family. MraY subfamily. The cofactor is Mg(2+).

The protein localises to the cell membrane. It carries out the reaction UDP-N-acetyl-alpha-D-muramoyl-L-alanyl-gamma-D-glutamyl-L-lysyl-D-alanyl-D-alanine + di-trans,octa-cis-undecaprenyl phosphate = Mur2Ac(oyl-L-Ala-gamma-D-Glu-L-Lys-D-Ala-D-Ala)-di-trans,octa-cis-undecaprenyl diphosphate + UMP. It participates in cell wall biogenesis; peptidoglycan biosynthesis. Its function is as follows. Catalyzes the initial step of the lipid cycle reactions in the biosynthesis of the cell wall peptidoglycan: transfers peptidoglycan precursor phospho-MurNAc-pentapeptide from UDP-MurNAc-pentapeptide onto the lipid carrier undecaprenyl phosphate, yielding undecaprenyl-pyrophosphoryl-MurNAc-pentapeptide, known as lipid I. This is Phospho-N-acetylmuramoyl-pentapeptide-transferase from Streptococcus pneumoniae serotype 2 (strain D39 / NCTC 7466).